Here is a 378-residue protein sequence, read N- to C-terminus: Odorant receptor Or2 (378 aa).

A topological domain (cytoplasmic) is located at residue Met1. The chain crosses the membrane as a helical span at residues 2–22 (LIEECPIIGVNVRVWLFWSYL). The Extracellular segment spans residues 23 to 29 (RRPRLSR). A helical membrane pass occupies residues 30-50 (FLVGCIPVAVLNVFQFLKLYS). Residues 51-59 (SWGDMSELI) lie on the Cytoplasmic side of the membrane. A helical membrane pass occupies residues 60-80 (INGYFTVLYFNLVLRTSFLVI). Residues 81–120 (NRRKFETFFEGVAAEYALLEKNDDIRPVLERYTRRGRMLS) are Extracellular-facing. A helical transmembrane segment spans residues 121–141 (ISNLWLGAFISACFVTYPLFV). Over 142–164 (PGRGLPYGVTIPGVDVLATPTYQ) the chain is Cytoplasmic. A helical transmembrane segment spans residues 165-185 (VVFVLQVYLTFPACCMYIPFT). Over 186-254 (SFYATCTLFA…HDLNSLVTHL (69 aa)) the chain is Extracellular. Residues 255 to 275 (CLLEFLSFGMMLCALLFLLSI) form a helical membrane-spanning segment. The Cytoplasmic portion of the chain corresponds to 276–278 (SNQ). Residues 279-299 (LAQMIMIGSYIFMILSQMFAF) traverse the membrane as a helical segment. Topologically, residues 300–378 (YWHANEVLEQ…YFTLLRRVYN (79 aa)) are extracellular. Asn364 is a glycosylation site (N-linked (GlcNAc...) asparagine).

Belongs to the insect chemoreceptor superfamily. Heteromeric odorant receptor channel (TC 1.A.69) family. Or30a subfamily. As to expression, expressed in male and female antennae and maxillary palps.

It localises to the cell membrane. Its function is as follows. Odorant receptor which plays a critical role in the anthropophilic host-seeking behavior; establishes the host preference to transmit malaria. This Anopheles gambiae (African malaria mosquito) protein is Odorant receptor Or2 (OR2).